Reading from the N-terminus, the 127-residue chain is Large ribosomal subunit protein bL17 (127 aa).

Belongs to the bacterial ribosomal protein bL17 family. As to quaternary structure, part of the 50S ribosomal subunit. Contacts protein L32.

The polypeptide is Large ribosomal subunit protein bL17 (Vibrio vulnificus (strain CMCP6)).